A 332-amino-acid chain; its full sequence is Ectoine dioxygenase (332 aa).

The span at 1-10 shows a compositional bias: polar residues; it reads MSVQTSSNRP. Positions 1 to 47 are disordered; the sequence is MSVQTSSNRPLPQANLHIATETPEADSRIRSAPRPGQDPYPTRLSEP. Position 163 (Gln163) interacts with L-ectoine. 2-oxoglutarate is bound at residue Lys169. Residues His180, Asp182, and His281 each contribute to the Fe cation site.

It belongs to the PhyH family. EctD subfamily. In terms of assembly, homodimer. Fe(2+) is required as a cofactor.

The catalysed reaction is L-ectoine + 2-oxoglutarate + O2 = 5-hydroxyectoine + succinate + CO2. In terms of biological role, involved in the biosynthesis of 5-hydroxyectoine, called compatible solute, which helps organisms to survive extreme osmotic stress by acting as a highly soluble organic osmolyte. Catalyzes the 2-oxoglutarate-dependent selective hydroxylation of L-ectoine to yield (4S,5S)-5-hydroxyectoine. The sequence is that of Ectoine dioxygenase from Halomonas elongata (strain ATCC 33173 / DSM 2581 / NBRC 15536 / NCIMB 2198 / 1H9).